Reading from the N-terminus, the 233-residue chain is Large ribosomal subunit protein uL1 (233 aa).

This sequence belongs to the universal ribosomal protein uL1 family. In terms of assembly, part of the 50S ribosomal subunit.

Binds directly to 23S rRNA. The L1 stalk is quite mobile in the ribosome, and is involved in E site tRNA release. In terms of biological role, protein L1 is also a translational repressor protein, it controls the translation of the L11 operon by binding to its mRNA. The sequence is that of Large ribosomal subunit protein uL1 from Shewanella pealeana (strain ATCC 700345 / ANG-SQ1).